The sequence spans 447 residues: Argininosuccinate synthase (447 aa).

Residues 20 to 28 and alanine 46 contribute to the ATP site; that span reads AFSGGLDTS. Tyrosine 102 contacts L-citrulline. ATP contacts are provided by glycine 132 and threonine 134. Threonine 134, asparagine 138, and aspartate 139 together coordinate L-aspartate. Asparagine 138 lines the L-citrulline pocket. Aspartate 139 lines the ATP pocket. Arginine 142 and serine 195 together coordinate L-citrulline. Aspartate 197 is a binding site for ATP. Residues threonine 204, glutamate 206, and glutamate 283 each contribute to the L-citrulline site.

Belongs to the argininosuccinate synthase family. Type 2 subfamily. In terms of assembly, homotetramer.

Its subcellular location is the cytoplasm. It catalyses the reaction L-citrulline + L-aspartate + ATP = 2-(N(omega)-L-arginino)succinate + AMP + diphosphate + H(+). It functions in the pathway amino-acid biosynthesis; L-arginine biosynthesis; L-arginine from L-ornithine and carbamoyl phosphate: step 2/3. This Neisseria meningitidis serogroup B (strain ATCC BAA-335 / MC58) protein is Argininosuccinate synthase (argG).